Reading from the N-terminus, the 369-residue chain is Glutamate 5-kinase (369 aa).

Residue Lys-9 coordinates ATP. Ser-49, Asp-136, and Asn-148 together coordinate substrate. Residues 168–169 (TD) and 210–216 (TGGMLTK) each bind ATP. The region spanning 275–355 (QGEIYVDQGA…KGVVIHRDDW (81 aa)) is the PUA domain.

Belongs to the glutamate 5-kinase family.

It localises to the cytoplasm. It carries out the reaction L-glutamate + ATP = L-glutamyl 5-phosphate + ADP. It functions in the pathway amino-acid biosynthesis; L-proline biosynthesis; L-glutamate 5-semialdehyde from L-glutamate: step 1/2. Functionally, catalyzes the transfer of a phosphate group to glutamate to form L-glutamate 5-phosphate. The polypeptide is Glutamate 5-kinase (Streptococcus sanguinis (strain SK36)).